Reading from the N-terminus, the 366-residue chain is DNA primase large subunit PriL (366 aa).

4 residues coordinate [4Fe-4S] cluster: Cys227, Cys298, Cys307, and Cys314.

The protein belongs to the eukaryotic-type primase large subunit family. In terms of assembly, heterodimer of a small subunit (PriS) and a large subunit (PriL). Requires [4Fe-4S] cluster as cofactor.

Functionally, regulatory subunit of DNA primase, an RNA polymerase that catalyzes the synthesis of short RNA molecules used as primers for DNA polymerase during DNA replication. Stabilizes and modulates the activity of the small subunit, increasing the rate of DNA synthesis, and conferring RNA synthesis capability. The DNA polymerase activity may enable DNA primase to also catalyze primer extension after primer synthesis. May also play a role in DNA repair. The chain is DNA primase large subunit PriL from Methanocella arvoryzae (strain DSM 22066 / NBRC 105507 / MRE50).